The primary structure comprises 71 residues: Calcium dodecin (71 aa).

E18 serves as a coordination point for Ca(2+).

This sequence belongs to the dodecin family. In terms of assembly, homododecamer; 12 subunits assemble to form a hollow sphere with a diameter of about 75 Angstroms. Calcium ions are bound at the interface between three subunits.

Binds calcium ions. May play a role in sequestering additional small ligands. This is Calcium dodecin (secE2) from Mycobacterium tuberculosis (strain ATCC 25618 / H37Rv).